The chain runs to 454 residues: Protection of telomeres protein 1b (454 aa).

It belongs to the telombin family. As to quaternary structure, interacts with TRB1, TRB2 and TRB3. As to expression, expressed at low levels in roots, rosette leaves, cauline leaves, stems and flowers.

It localises to the nucleus. The protein localises to the chromosome. Its subcellular location is the telomere. Negatively regulates telomerase activity and participates in chromosome end protection. Binds RNA non-specifically. Associates with a regulatory Pol III-dependent lncRNA, which represses telomerase activity in response to DNA damage. Binds single-stranded telomeric DNA with weak affinity. This Arabidopsis thaliana (Mouse-ear cress) protein is Protection of telomeres protein 1b.